Here is a 305-residue protein sequence, read N- to C-terminus: Ribosomal RNA large subunit methyltransferase F (305 aa).

The protein belongs to the methyltransferase superfamily. METTL16/RlmF family.

The protein resides in the cytoplasm. It catalyses the reaction adenosine(1618) in 23S rRNA + S-adenosyl-L-methionine = N(6)-methyladenosine(1618) in 23S rRNA + S-adenosyl-L-homocysteine + H(+). Its function is as follows. Specifically methylates the adenine in position 1618 of 23S rRNA. This chain is Ribosomal RNA large subunit methyltransferase F, found in Enterobacter sp. (strain 638).